The following is a 680-amino-acid chain: Anosmin-1 (680 aa).

Residues 1–24 (MVPGVPGAVLTLCLWLAASSGCLA) form the signal peptide. 5 cysteine pairs are disulfide-bonded: Cys49–Cys83, Cys53–Cys77, Cys86–Cys105, Cys90–Cys101, and Cys116–Cys120. Asn71 carries N-linked (GlcNAc...) asparagine glycosylation. A WAP domain is found at 127–176 (LLVKQGDCPAPEKASGFAAACVESCEVDNECSGVKKCCSNGCGHTCQVPK). Fibronectin type-III domains lie at 186-287 (PRKE…SKDP), 292-400 (APAN…THAT), 425-523 (PTRP…TPPC), and 550-658 (KPEN…LPPS). Residues Asn209, Asn300, Asn470, Asn553, and Asn564 are each glycosylated (N-linked (GlcNAc...) asparagine). A disordered region spans residues 642–680 (EGPATIKTFRTPELPPSSAHRSHLKHRHPHHYKPSPERY). Basic residues predominate over residues 661-674 (HRSHLKHRHPHHYK).

As to quaternary structure, interacts with FGFR1; this interaction does not interfere with FGF2-binding to FGFR1. Binds heparin. Heparin may promote or interfere with ANOS1-FGFR1-FGF2 complex formation depending on the sequential order of its binding to the various constituents. For instance, heparin-ANOS1 interaction favors subsequent binding to pre-existing binary FGFR1-FGF2 complex, while heparin-FGF2 complex does not interact with ANOS1-FGFR1. N-glycosylated. Post-translationally, may be proteolytically cleaved at the cell surface and released from the cell surface. As to expression, expressed in the cerebellum (at protein level).

It is found in the cell membrane. The protein resides in the secreted. Functionally, has a dual branch-promoting and guidance activity, which may play an important role in the patterning of mitral and tufted cell collaterals to the olfactory cortex. Chemoattractant for fetal olfactory epithelial cells. In Homo sapiens (Human), this protein is Anosmin-1.